We begin with the raw amino-acid sequence, 464 residues long: Cysteine--tRNA ligase (464 aa).

A Zn(2+)-binding site is contributed by C28. A 'HIGH' region motif is present at residues 30–40 (PTVYDHSHIGH). 3 residues coordinate Zn(2+): C205, H230, and E234. Residues 263-267 (KMSKS) carry the 'KMSKS' region motif. Residue K266 coordinates ATP.

Belongs to the class-I aminoacyl-tRNA synthetase family. The cofactor is Zn(2+).

The protein localises to the cytoplasm. The enzyme catalyses tRNA(Cys) + L-cysteine + ATP = L-cysteinyl-tRNA(Cys) + AMP + diphosphate. This chain is Cysteine--tRNA ligase, found in Ignicoccus hospitalis (strain KIN4/I / DSM 18386 / JCM 14125).